The chain runs to 210 residues: 3-hexulose-6-phosphate synthase (210 aa).

The protein belongs to the HPS/KGPDC family. HPS subfamily.

It catalyses the reaction D-ribulose 5-phosphate + formaldehyde = D-arabino-hex-3-ulose 6-phosphate. It participates in one-carbon metabolism; formaldehyde assimilation via RuMP pathway; D-fructose 6-phosphate from D-ribulose 5-phosphate and formaldehyde: step 1/2. Functionally, catalyzes the condensation of ribulose 5-phosphate with formaldehyde to form 3-hexulose 6-phosphate. In Staphylococcus haemolyticus (strain JCSC1435), this protein is 3-hexulose-6-phosphate synthase.